Consider the following 258-residue polypeptide: UPF0246 protein IL2146 (258 aa).

Belongs to the UPF0246 family.

The polypeptide is UPF0246 protein IL2146 (Idiomarina loihiensis (strain ATCC BAA-735 / DSM 15497 / L2-TR)).